We begin with the raw amino-acid sequence, 549 residues long: Oxygen-dependent choline dehydrogenase (549 aa).

Residue 4–33 participates in FAD binding; it reads DFVIIGSGSAGSAMAYRLSEDGRYSVIVIE. The active-site Proton acceptor is histidine 465.

Belongs to the GMC oxidoreductase family. FAD is required as a cofactor.

It carries out the reaction choline + A = betaine aldehyde + AH2. It catalyses the reaction betaine aldehyde + NAD(+) + H2O = glycine betaine + NADH + 2 H(+). It participates in amine and polyamine biosynthesis; betaine biosynthesis via choline pathway; betaine aldehyde from choline (cytochrome c reductase route): step 1/1. Functionally, involved in the biosynthesis of the osmoprotectant glycine betaine. Catalyzes the oxidation of choline to betaine aldehyde and betaine aldehyde to glycine betaine at the same rate. This chain is Oxygen-dependent choline dehydrogenase, found in Brucella anthropi (strain ATCC 49188 / DSM 6882 / CCUG 24695 / JCM 21032 / LMG 3331 / NBRC 15819 / NCTC 12168 / Alc 37) (Ochrobactrum anthropi).